Consider the following 526-residue polypeptide: Protein translocase subunit SecD (526 aa).

6 helical membrane passes run 8–28 (LIVFIFALLLGVGFSVPSLLE), 356–376 (IIALVGGFILVMGFMALYYSM), 379–399 (VIACMALVVNLFLIVAVMAIF), 405–425 (LPGMAGIVLTVGIAVDANIII), 453–473 (AIFDSNITSLIASVLLYAYGT), and 478–498 (GFALTTGIGILASIITAIIGT).

It belongs to the SecD/SecF family. SecD subfamily. As to quaternary structure, forms a complex with SecF. Part of the essential Sec protein translocation apparatus which comprises SecA, SecYEG and auxiliary proteins SecDF-YajC and YidC.

Its subcellular location is the cell inner membrane. In terms of biological role, part of the Sec protein translocase complex. Interacts with the SecYEG preprotein conducting channel. SecDF uses the proton motive force (PMF) to complete protein translocation after the ATP-dependent function of SecA. This chain is Protein translocase subunit SecD, found in Helicobacter pylori (strain J99 / ATCC 700824) (Campylobacter pylori J99).